The chain runs to 147 residues: UPF0735 ACT domain-containing protein BPUM_2431 (147 aa).

Positions 70-145 (TLFFHLEDRS…FVEKVEILGS (76 aa)) constitute an ACT domain.

This sequence belongs to the UPF0735 family.

The polypeptide is UPF0735 ACT domain-containing protein BPUM_2431 (Bacillus pumilus (strain SAFR-032)).